The sequence spans 196 residues: Probable GTP-binding protein EngB (196 aa).

Positions 22–195 (KLPEVALAGR…WNWIESITKV (174 aa)) constitute an EngB-type G domain. GTP-binding positions include 30 to 37 (GRSNVGKS), 57 to 61 (GKTQT), 75 to 78 (DVPG), 142 to 145 (TKID), and 174 to 176 (FSA). Mg(2+) is bound by residues serine 37 and threonine 59.

This sequence belongs to the TRAFAC class TrmE-Era-EngA-EngB-Septin-like GTPase superfamily. EngB GTPase family. It depends on Mg(2+) as a cofactor.

Functionally, necessary for normal cell division and for the maintenance of normal septation. This chain is Probable GTP-binding protein EngB, found in Ligilactobacillus salivarius (strain UCC118) (Lactobacillus salivarius).